The primary structure comprises 344 residues: Methylthioribose-1-phosphate isomerase (344 aa).

Substrate-binding positions include 55-57, R98, and Q202; that span reads RGA. The active-site Proton donor is D243. 253–254 is a binding site for substrate; the sequence is NK.

The protein belongs to the eIF-2B alpha/beta/delta subunits family. MtnA subfamily.

It catalyses the reaction 5-(methylsulfanyl)-alpha-D-ribose 1-phosphate = 5-(methylsulfanyl)-D-ribulose 1-phosphate. It participates in amino-acid biosynthesis; L-methionine biosynthesis via salvage pathway; L-methionine from S-methyl-5-thio-alpha-D-ribose 1-phosphate: step 1/6. Its function is as follows. Catalyzes the interconversion of methylthioribose-1-phosphate (MTR-1-P) into methylthioribulose-1-phosphate (MTRu-1-P). The protein is Methylthioribose-1-phosphate isomerase of Gemmatimonas aurantiaca (strain DSM 14586 / JCM 11422 / NBRC 100505 / T-27).